The chain runs to 339 residues: MANDNRRTVTVYGATGAQGGAVARSLLKNHAFKVRAITRKPDSEAAKALRALGAEIVQGDGWSKEQMVAAFSGSWAAFVNTNSDDPCFVDGHPPTEVDLGKIIIDAIIEAGTVKHLVYSSFVDTSSFTNGQASIKAADMKAKVQRYAADSGHFDTVCPLYQGWYMGIFLRQDYARALGGFPYFQDEDGFRTLHLPRWGTHTDMPIPWISLEDDFGDIVHGIFLEPENYNRRVVPTVSDVCTYPEVMDAVHALATGQKAQYIPVTDWEAHFGDSHHGRESLTIFKFGHFTNGKYFGHEPISTDISAYLKSKAAEAQGKDPSDRKLITLSEWFEKHVAPLI.

Residues Gly13–Gln18, Arg39–Ser43, Asp60–Gly61, Thr81–Ser83, Lys140, and Tyr164–Ile167 contribute to the NADP(+) site.

It belongs to the NmrA-type oxidoreductase family.

NmrA-like family domain-containing oxidoreductase; part of the gene cluster that mediates the biosynthesis of notoamide, a fungal indole alkaloid that belongs to a family of natural products containing a characteristic bicyclo[2.2.2]diazaoctane core. The first step of notoamide biosynthesis involves coupling of L-proline and L-tryptophan by the bimodular NRPS notE, to produce cyclo-L-tryptophan-L-proline called brevianamide F. The reverse prenyltransferase notF then acts as a deoxybrevianamide E synthase and converts brevianamide F to deoxybrevianamide E via reverse prenylation at C-2 of the indole ring leading to the bicyclo[2.2.2]diazaoctane core. Deoxybrevianamide E is further hydroxylated at C-6 of the indole ring, likely catalyzed by the cytochrome P450 monooxygenase notG, to yield 6-hydroxy-deoxybrevianamide E. 6-hydroxy-deoxybrevianamide E is a specific substrate of the prenyltransferase notC for normal prenylation at C-7 to produce 6-hydroxy-7-prenyl-deoxybrevianamide, also called notoamide S. As the proposed pivotal branching point in notoamide biosynthesis, notoamide S can be diverted to notoamide E through an oxidative pyran ring closure putatively catalyzed by either notH cytochrome P450 monooxygenase or the notD FAD-linked oxidoreductase. This step would be followed by an indole 2,3-epoxidation-initiated pinacol-like rearrangement catalyzed by the notB FAD-dependent monooxygenase leading to the formation of notoamide C and notoamide D. On the other hand notoamide S is converted to notoamide T by notH (or notD), a bifunctional oxidase that also functions as the intramolecular Diels-Alderase responsible for generation of (+)-notoamide T. To generate antipodal (-)-notoaminide T, notH' (or notD') in Aspergillus versicolor is expected to catalyze a Diels-Alder reaction leading to the opposite stereochemistry. The remaining oxidoreductase notD (or notH) likely catalyzes the oxidative pyran ring formation to yield (+)-stephacidin A. The FAD-dependent monooxygenase notI is highly similar to notB and is predicted to catalyze a similar conversion from (+)-stephacidin A to (-)-notoamide B via the 2,3-epoxidation of (+)-stephacidin A followed by a pinacol-type rearrangement. Finally, it remains unclear which enzyme could be responsible for the final hydroxylation steps leading to notoamide A and sclerotiamide. The sequence is that of NmrA-like family domain-containing oxidoreductase notA from Aspergillus sp. (strain MF297-2).